The chain runs to 186 residues: ADP-ribosylation factor-like protein 8A (186 aa).

Residues 1–19 constitute an intramembrane region (note=Mediates targeting to membranes); it reads MLALFNKLLDWFKALFWKE. GTP-binding positions include 29-35, 71-75, and 130-133; these read QYSGKTT, DIGGQ, and NKRD.

This sequence belongs to the small GTPase superfamily. Arf family.

The protein resides in the late endosome membrane. Its subcellular location is the lysosome membrane. Its function is as follows. May play a role in lysosomes motility. Alternatively, may play a role in chromosome segregation. The sequence is that of ADP-ribosylation factor-like protein 8A (arl8a) from Xenopus tropicalis (Western clawed frog).